Consider the following 209-residue polypeptide: ATP-dependent Clp protease proteolytic subunit (209 aa).

Serine 113 acts as the Nucleophile in catalysis. Histidine 138 is an active-site residue.

It belongs to the peptidase S14 family. In terms of assembly, fourteen ClpP subunits assemble into 2 heptameric rings which stack back to back to give a disk-like structure with a central cavity, resembling the structure of eukaryotic proteasomes.

The protein localises to the cytoplasm. The enzyme catalyses Hydrolysis of proteins to small peptides in the presence of ATP and magnesium. alpha-casein is the usual test substrate. In the absence of ATP, only oligopeptides shorter than five residues are hydrolyzed (such as succinyl-Leu-Tyr-|-NHMec, and Leu-Tyr-Leu-|-Tyr-Trp, in which cleavage of the -Tyr-|-Leu- and -Tyr-|-Trp bonds also occurs).. Its function is as follows. Cleaves peptides in various proteins in a process that requires ATP hydrolysis. Has a chymotrypsin-like activity. Plays a major role in the degradation of misfolded proteins. This is ATP-dependent Clp protease proteolytic subunit from Blochmanniella floridana.